We begin with the raw amino-acid sequence, 542 residues long: Phosphoenolpyruvate carboxykinase (ATP) (542 aa).

Residues Arg-67, Tyr-208, and Lys-214 each contribute to the substrate site. Residues Lys-214, His-233, and 249-257 (GLSGTGKTT) each bind ATP. 2 residues coordinate Mn(2+): Lys-214 and His-233. Asp-270 serves as a coordination point for Mn(2+). ATP-binding positions include Glu-298, Arg-334, 450–451 (RI), and Thr-456. Residue Arg-334 coordinates substrate.

The protein belongs to the phosphoenolpyruvate carboxykinase (ATP) family. Monomer. The cofactor is Mn(2+).

The protein resides in the cytoplasm. The catalysed reaction is oxaloacetate + ATP = phosphoenolpyruvate + ADP + CO2. Its pathway is carbohydrate biosynthesis; gluconeogenesis. Functionally, involved in the gluconeogenesis. Catalyzes the conversion of oxaloacetate (OAA) to phosphoenolpyruvate (PEP) through direct phosphoryl transfer between the nucleoside triphosphate and OAA. This is Phosphoenolpyruvate carboxykinase (ATP) from Vibrio campbellii (strain ATCC BAA-1116).